We begin with the raw amino-acid sequence, 175 residues long: NADH dehydrogenase [ubiquinone] iron-sulfur protein 4, mitochondrial (175 aa).

Residues methionine 1–leucine 42 constitute a mitochondrion transit peptide. The tract at residues lysine 151–lysine 175 is disordered. A Phosphoserine; by PKA modification is found at serine 173.

This sequence belongs to the complex I NDUFS4 subunit family. As to quaternary structure, mammalian complex I is composed of 45 different subunits. This is a component of the iron-sulfur (IP) fragment of the enzyme. Interacts with BCAP31 and TOMM40; the interaction mediates its translocation to the mitochondria; the interaction with BCAP31 is direct.

Its subcellular location is the mitochondrion inner membrane. In terms of biological role, accessory subunit of the mitochondrial membrane respiratory chain NADH dehydrogenase (Complex I), that is believed not to be involved in catalysis. Complex I functions in the transfer of electrons from NADH to the respiratory chain. The immediate electron acceptor for the enzyme is believed to be ubiquinone. The polypeptide is NADH dehydrogenase [ubiquinone] iron-sulfur protein 4, mitochondrial (NDUFS4) (Homo sapiens (Human)).